Reading from the N-terminus, the 275-residue chain is Large ribosomal subunit protein uL2 (275 aa).

Residues 223–275 (VAMNPIDHPHGGGEGRTSGGRHPVSPWGVPTKGYKTRSNKRTDKYIVRRRNKK) are disordered.

Belongs to the universal ribosomal protein uL2 family. Part of the 50S ribosomal subunit. Forms a bridge to the 30S subunit in the 70S ribosome.

Functionally, one of the primary rRNA binding proteins. Required for association of the 30S and 50S subunits to form the 70S ribosome, for tRNA binding and peptide bond formation. It has been suggested to have peptidyltransferase activity; this is somewhat controversial. Makes several contacts with the 16S rRNA in the 70S ribosome. This chain is Large ribosomal subunit protein uL2, found in Shewanella woodyi (strain ATCC 51908 / MS32).